The chain runs to 378 residues: Succinyl-diaminopimelate desuccinylase (378 aa).

A Zn(2+)-binding site is contributed by H67. Residue D69 is part of the active site. D100 contacts Zn(2+). The Proton acceptor role is filled by E134. Residues E135, E163, and H349 each coordinate Zn(2+).

It belongs to the peptidase M20A family. DapE subfamily. Homodimer. Requires Zn(2+) as cofactor. It depends on Co(2+) as a cofactor.

It catalyses the reaction N-succinyl-(2S,6S)-2,6-diaminopimelate + H2O = (2S,6S)-2,6-diaminopimelate + succinate. The protein operates within amino-acid biosynthesis; L-lysine biosynthesis via DAP pathway; LL-2,6-diaminopimelate from (S)-tetrahydrodipicolinate (succinylase route): step 3/3. Catalyzes the hydrolysis of N-succinyl-L,L-diaminopimelic acid (SDAP), forming succinate and LL-2,6-diaminopimelate (DAP), an intermediate involved in the bacterial biosynthesis of lysine and meso-diaminopimelic acid, an essential component of bacterial cell walls. The sequence is that of Succinyl-diaminopimelate desuccinylase from Pasteurella multocida (strain Pm70).